The sequence spans 298 residues: Tyrosine recombinase XerC (298 aa).

The 87-residue stretch at 2 to 88 folds into the Core-binding (CB) domain; that stretch reads TDLHTDVERY…ALRSFFDWLV (87 aa). Residues 109-288 enclose the Tyr recombinase domain; it reads HLPKNIDVDD…DFQHLASVYD (180 aa). Active-site residues include R148, K172, H240, R243, and H266. The active-site O-(3'-phospho-DNA)-tyrosine intermediate is the Y275.

This sequence belongs to the 'phage' integrase family. XerC subfamily. Forms a cyclic heterotetrameric complex composed of two molecules of XerC and two molecules of XerD, in which XerC interacts with XerD via its C-terminal region, XerD interacts with XerC via its C-terminal region and so on.

Its subcellular location is the cytoplasm. FtsK may regulate the catalytic switch between XerC and XerD in the heterotetrameric complex during the two steps of the recombination process. In terms of biological role, site-specific tyrosine recombinase, which acts by catalyzing the cutting and rejoining of the recombining DNA molecules. Binds cooperatively to specific DNA consensus sequences that are separated from XerD binding sites by a short central region, forming the heterotetrameric XerC-XerD complex that recombines DNA substrates. The complex is essential to convert dimers of the bacterial chromosome into monomers to permit their segregation at cell division. It also contributes to the segregational stability of plasmids. In the complex XerC specifically exchanges the top DNA strands. This chain is Tyrosine recombinase XerC, found in Escherichia coli O139:H28 (strain E24377A / ETEC).